The chain runs to 154 residues: 6,7-dimethyl-8-ribityllumazine synthase (154 aa).

Residues Phe23, 57-59 (AYE), and 81-83 (AVI) contribute to the 5-amino-6-(D-ribitylamino)uracil site. Position 86-87 (86-87 (GT)) interacts with (2S)-2-hydroxy-3-oxobutyl phosphate. The Proton donor role is filled by His89. Phe114 contributes to the 5-amino-6-(D-ribitylamino)uracil binding site. A (2S)-2-hydroxy-3-oxobutyl phosphate-binding site is contributed by Arg128.

It belongs to the DMRL synthase family. In terms of assembly, forms an icosahedral capsid composed of 60 subunits, arranged as a dodecamer of pentamers.

It carries out the reaction (2S)-2-hydroxy-3-oxobutyl phosphate + 5-amino-6-(D-ribitylamino)uracil = 6,7-dimethyl-8-(1-D-ribityl)lumazine + phosphate + 2 H2O + H(+). It participates in cofactor biosynthesis; riboflavin biosynthesis; riboflavin from 2-hydroxy-3-oxobutyl phosphate and 5-amino-6-(D-ribitylamino)uracil: step 1/2. In terms of biological role, catalyzes the formation of 6,7-dimethyl-8-ribityllumazine by condensation of 5-amino-6-(D-ribitylamino)uracil with 3,4-dihydroxy-2-butanone 4-phosphate. This is the penultimate step in the biosynthesis of riboflavin. The chain is 6,7-dimethyl-8-ribityllumazine synthase from Acidithiobacillus ferrooxidans (strain ATCC 23270 / DSM 14882 / CIP 104768 / NCIMB 8455) (Ferrobacillus ferrooxidans (strain ATCC 23270)).